The primary structure comprises 151 residues: Arginine repressor (151 aa).

The protein belongs to the ArgR family.

The protein localises to the cytoplasm. The protein operates within amino-acid biosynthesis; L-arginine biosynthesis [regulation]. Regulates arginine biosynthesis genes. The sequence is that of Arginine repressor from Clostridium novyi (strain NT).